Reading from the N-terminus, the 345-residue chain is WD40 repeat protein poxJ (345 aa).

4 WD repeats span residues 15 to 49 (ANPP…YDVS), 59 to 100 (LFNF…EAQQ), 101 to 146 (VAAH…PLAT), and 250 to 284 (VNDV…RLKS).

The protein belongs to the WD repeat rae1 family.

The protein operates within secondary metabolite biosynthesis. WD40 repeat protein; part of the gene cluster that mediates the biosynthesis of oxaleimides, cytotoxic compounds containing an unusual disubstituted succinimide moiety. The first step of the pathway is provided by the HR-PKS poxF that serves in a new mode of collaborative biosynthesis with the PKS-NRPS poxE, by providing the olefin containing amino acid substrate via the synthesis of an ACP-bound dec-4-enoate. The cytochrome P450 monooxygenase poxM-catalyzed oxidation at the alpha-position creates the enzyme-bound 2-hydroxydec-4-enoyl-ACP thioester, which may be prone to spontaneous hydrolysis to yield 2-hydroxydec-4-enoic acid due to increased electrophilicity of the carbonyl. 2-hydroxydec-4-enoic acid can then be further oxidized by poxM to yield the alpha-ketoacid 2-oxodec-4-enoicacid, which is reductively aminated by the aminotransferase poxL to yield (S,E)-2-aminodec-4-enoic acid. The Hybrid PKS-NRPS synthetase poxE then performs condensation between the octaketide product of its PKS modules and the amino group of (S,E)-2-aminodec-4-enoic acid which is activated and incorporated by the adenylation domain. The resulting aminoacyl product can be cyclized by the Diels-Alderase PoxQ and reductively released by the reductive (R) domain of poxE to yield an aldehyde intermediate. The released aldehyde is then substrate for a Knoevenagel condensation by the hydrolyase poxO followed by an oxidation at the 5-position of the pyrrolidone ring. The presence of the olefin from the amino acid building block allows for migration of the substituted allyl group to occur. This allylic transposition reaction takes place in a conjugate addition, semipinacol-like fashion to yield a succinimide intermediate. Iterative two-electron oxidations of the C7 methyl of the succinimide intermediate to the carboxylic acid can be catalyzed by one of two remaining cytochrome P450 monooxygenasess poxC or poxD to yield oxaleimide A. Subsequent oxidation yields the maleimide scaffold oxaleimide I. Both oxaleimide A and oxaleimide I can undergo oxidative modifications in the decalin ring to yield the series of products oxaleimides B to H. The sequence is that of WD40 repeat protein poxJ from Penicillium oxalicum (strain 114-2 / CGMCC 5302) (Penicillium decumbens).